A 157-amino-acid polypeptide reads, in one-letter code: Small ribosomal subunit protein uS7 (157 aa).

It belongs to the universal ribosomal protein uS7 family. In terms of assembly, part of the 30S ribosomal subunit. Contacts proteins S9 and S11.

Its function is as follows. One of the primary rRNA binding proteins, it binds directly to 16S rRNA where it nucleates assembly of the head domain of the 30S subunit. Is located at the subunit interface close to the decoding center, probably blocks exit of the E-site tRNA. The protein is Small ribosomal subunit protein uS7 of Variovorax paradoxus (strain S110).